The chain runs to 141 residues: Hemoglobin subunit alpha-1 (141 aa).

A Globin domain is found at 1–141 (VLSPEDKNNV…VSTVLTSKYR (141 aa)). Residue His-58 coordinates O2. His-87 serves as a coordination point for heme b.

The protein belongs to the globin family. Heterotetramer of two alpha chains and two beta chains. Red blood cells.

Its function is as follows. Involved in oxygen transport from the lung to the various peripheral tissues. The protein is Hemoglobin subunit alpha-1 of Tadarida brasiliensis (Brazilian free-tailed bat).